A 928-amino-acid polypeptide reads, in one-letter code: 2-oxoglutarate dehydrogenase E1 component (928 aa).

This sequence belongs to the alpha-ketoglutarate dehydrogenase family. In terms of assembly, homodimer. Part of the 2-oxoglutarate dehydrogenase (OGDH) complex composed of E1 (2-oxoglutarate dehydrogenase), E2 (dihydrolipoamide succinyltransferase) and E3 (dihydrolipoamide dehydrogenase); the complex contains multiple copies of the three enzymatic components (E1, E2 and E3). It depends on thiamine diphosphate as a cofactor.

It catalyses the reaction N(6)-[(R)-lipoyl]-L-lysyl-[protein] + 2-oxoglutarate + H(+) = N(6)-[(R)-S(8)-succinyldihydrolipoyl]-L-lysyl-[protein] + CO2. In terms of biological role, E1 component of the 2-oxoglutarate dehydrogenase (OGDH) complex which catalyzes the decarboxylation of 2-oxoglutarate, the first step in the conversion of 2-oxoglutarate to succinyl-CoA and CO(2). In Rickettsia conorii (strain ATCC VR-613 / Malish 7), this protein is 2-oxoglutarate dehydrogenase E1 component (sucA).